The primary structure comprises 295 residues: Bifunctional protein FolD (295 aa).

NADP(+) contacts are provided by residues 166–168, Ser-195, and Ile-236; that span reads GRS.

This sequence belongs to the tetrahydrofolate dehydrogenase/cyclohydrolase family. In terms of assembly, homodimer.

It catalyses the reaction (6R)-5,10-methylene-5,6,7,8-tetrahydrofolate + NADP(+) = (6R)-5,10-methenyltetrahydrofolate + NADPH. The enzyme catalyses (6R)-5,10-methenyltetrahydrofolate + H2O = (6R)-10-formyltetrahydrofolate + H(+). It functions in the pathway one-carbon metabolism; tetrahydrofolate interconversion. Catalyzes the oxidation of 5,10-methylenetetrahydrofolate to 5,10-methenyltetrahydrofolate and then the hydrolysis of 5,10-methenyltetrahydrofolate to 10-formyltetrahydrofolate. In Pelodictyon phaeoclathratiforme (strain DSM 5477 / BU-1), this protein is Bifunctional protein FolD.